The chain runs to 558 residues: Protein shisa-7 (558 aa).

The signal sequence occupies residues 1 to 22 (MPALLLLGTVALLASAAGPAGA). Residues 23 to 189 (RPSNDTSSVA…GGEGPGGSTA (167 aa)) are Extracellular-facing. An N-linked (GlcNAc...) asparagine glycan is attached at asparagine 26. Disordered regions lie at residues 53–79 (GGSAAGTSANATKTSPASGTGAAARAP) and 142–181 (TPPPLAGGAGGAGGAGGGPGPGQAGWLEGGRAGGAGGRGG). Positions 57 to 77 (AGTSANATKTSPASGTGAAAR) are enriched in low complexity. Over residues 148 to 181 (GGAGGAGGAGGGPGPGQAGWLEGGRAGGAGGRGG) the composition is skewed to gly residues. Residues 154–175 (GGAGGGPGPGQAGWLEGGRAGG) are GRID. A helical transmembrane segment spans residues 190–210 (YVVCGVISFALAVGVGAKVAF). Over 211–558 (SKASRAPRAH…RTASKNEVTV (348 aa)) the chain is Cytoplasmic. The tract at residues 236-263 (QAGPATRPDRARSSSLTPGLGGPDSMAP) is disordered. At serine 438 the chain carries Phosphoserine. A disordered region spans residues 443-506 (RQSREHLLSP…HHHHALHGSP (64 aa)). The segment covering 453-462 (PRSPALPPDP) has biased composition (pro residues). Positions 466–477 (ASLAASHSNLLL) are enriched in low complexity. Threonine 532 is subject to Phosphothreonine. Residues 555–558 (EVTV) carry the PDZ-binding motif.

Belongs to the shisa family. In terms of assembly, interacts with GABA(A)R (GABA type A receptor) subunits GABRA1, GABRA2 and GABRG2; the interaction is direct. Does not interact with GABRB2 and GABRB3 subunits. Interacts with AMPAR subunits GRIA1, GRIA2 and GRIA3 and AMPAR auxiliary proteins SHISA6 and SHISA7 in heterologous cells. Interacts (via PDZ-binding motif) with DLG4/PSD-95 (via PDZ domain)in heterologous cells; the interaction is direct. Post-translationally, N-glycosylated. As to expression, mainly expressed in neurons. Highly expressed in brain structures including cortex, striatum, olfactory bulb, amygdala hippocampus CA1-3 and dentate gyrus (at protein level).

It is found in the postsynaptic density membrane. Functionally, transmembrane protein that regulates gamma-aminobutyric acid type A receptor (GABA(A)R) trafficking, channel deactivation kinetics and pharmacology, necessary for fast inhibitory transmission in the brain. Enhances the action of benzodiazepine, a primary GABA(A)Rs target drug, in the brain. May affect channel kinetics of AMPA-type glutamate receptors (AMPAR), the brain's main excitatory neurotransmitter, necessary for synaptic hippocampal plasticity, and memory recall. May regulate the induction and maintenance of long-term potentiation at Schaffer collaterals/CA3-CA1 excitatory synapses. The chain is Protein shisa-7 from Mus musculus (Mouse).